Here is a 129-residue protein sequence, read N- to C-terminus: Follitropin subunit beta (129 aa).

The first 20 residues, 1 to 20 (MKTLQFFFLFCCWKAICCNS), serve as a signal peptide directing secretion. Cystine bridges form between cysteine 21–cysteine 69, cysteine 35–cysteine 84, cysteine 38–cysteine 122, cysteine 46–cysteine 100, cysteine 50–cysteine 102, and cysteine 105–cysteine 112. N-linked (GlcNAc...) asparagine glycans are attached at residues asparagine 25 and asparagine 42.

This sequence belongs to the glycoprotein hormones subunit beta family. In terms of assembly, heterodimer. The active follitropin is a heterodimer composed of an alpha chain/CGA shared with other hormones and a unique beta chain/FSHB shown here.

The protein localises to the secreted. Functionally, together with the alpha chain CGA constitutes follitropin, the follicle-stimulating hormone, and provides its biological specificity to the hormone heterodimer. Binds FSHR, a G protein-coupled receptor, on target cells to activate downstream signaling pathways. Follitropin is involved in follicle development and spermatogenesis in reproductive organs. The sequence is that of Follitropin subunit beta (FSHB) from Gorilla gorilla gorilla (Western lowland gorilla).